Consider the following 69-residue polypeptide: Large ribosomal subunit protein uL29 (69 aa).

The protein belongs to the universal ribosomal protein uL29 family.

This is Large ribosomal subunit protein uL29 from Staphylococcus aureus (strain Mu3 / ATCC 700698).